We begin with the raw amino-acid sequence, 424 residues long: Chloroquine resistance transporter (424 aa).

Residues 1 to 58 (MKFASKKNNQKNSSKNDERYRELDNLVQEGNGSRLGGGSCLGKCAHVFKLIFKEIKDN) are Cytoplasmic-facing. The chain crosses the membrane as a helical span at residues 59-79 (IFIYILSIIYLSVCVMNKIFA). The Vacuolar segment spans residues 80 to 90 (KRTLNKIGNYS). The N-linked (GlcNAc...) asparagine glycan is linked to Asn-88. Residues 91–111 (FVTSETHNFICMIMFFIVYSL) form a helical membrane-spanning segment. Over 112–127 (FGNKKGNSKERHRSFN) the chain is Cytoplasmic. A helical membrane pass occupies residues 128–148 (LQFFAISMLDACSVILAFIGL). Over 149–154 (TRTTGN) the chain is Vacuolar. The chain crosses the membrane as a helical span at residues 155 to 175 (IQSFVLQLSIPINMFFCFLIL). The Cytoplasmic segment spans residues 176-178 (RYR). Residues 179–199 (YHLYNYLGAVIIVVTIALVEM) traverse the membrane as a helical segment. Residues 200–209 (KLSFETQEEN) lie on the Vacuolar side of the membrane. Residues 210–230 (SIIFNLVLISALIPVCFSNMT) traverse the membrane as a helical segment. The Cytoplasmic portion of the chain corresponds to 231–248 (REIVFKKYKIDILRLNAM). The helical transmembrane segment at 249 to 269 (VSFFQLFTSCLILPVYTLPFL) threads the bilayer. Residues 270–317 (KQLHLPYNEIWTNIKNGFACLFLGRNTVVENCGLGMAKLCDDCDGAWK) are Vacuolar-facing. 2 disulfides stabilise this stretch: Cys-289-Cys-312 and Cys-301-Cys-309. A helical membrane pass occupies residues 318–338 (TFALFSFFNICDNLITSYIID). Residues 339 to 346 (KFSTMTYT) are Cytoplasmic-facing. Residues 347 to 367 (IVSCIQGPAIAIAYYFKFLAG) form a helical membrane-spanning segment. The Vacuolar segment spans residues 368–377 (DVVREPRLLD). A helical membrane pass occupies residues 378 to 398 (FVTLFGYLFGSIIYRVGNIIL). Over 399-424 (ERKKMRNEENEDSEGELTNVDSIITQ) the chain is Cytoplasmic.

Belongs to the CRT-like transporter family. As to quaternary structure, monomer.

The protein localises to the vacuole membrane. It carries out the reaction L-arginine(in) = L-arginine(out). It catalyses the reaction L-lysine(in) = L-lysine(out). The enzyme catalyses L-histidine(out) = L-histidine(in). The catalysed reaction is histamine(out) = histamine(in). It carries out the reaction spermidine(in) = spermidine(out). It catalyses the reaction Fe(3+)(in) = Fe(3+)(out). The enzyme catalyses Fe(2+)(in) = Fe(2+)(out). Its activity is regulated as follows. Transporter activity is trans-stimulated by host-derived peptides containing 4-11 amino acids. Trans-stimulation by hemoglobin-derived peptide VDPVNF is pH-dependent and sodium-independent. Saquinavir trans-stimulates transport of hemoglobin-derived peptide VDPVNF. Protons are non-competitive inhibitors of chloroquine transport. Nutrient transporter. Substrate transport is pH-dependent. Can transport arginine, lysine, histidine, peptides, histamine and spermidine. May modulate activity of endogenous transporters. Involved in maintaining the osmotic homeostasis of the digestive vacuole. Required for the asexual intraerythrocytic proliferation of parasites. Can transport Fe(2+) and Fe(3+). The polypeptide is Chloroquine resistance transporter (Plasmodium falciparum).